Reading from the N-terminus, the 503-residue chain is Lysine--tRNA ligase (503 aa).

Mg(2+) contacts are provided by Glu-410 and Glu-417.

It belongs to the class-II aminoacyl-tRNA synthetase family. In terms of assembly, homodimer. Requires Mg(2+) as cofactor.

It localises to the cytoplasm. It carries out the reaction tRNA(Lys) + L-lysine + ATP = L-lysyl-tRNA(Lys) + AMP + diphosphate. This chain is Lysine--tRNA ligase, found in Prochlorococcus marinus (strain MIT 9211).